Consider the following 142-residue polypeptide: uncharacterized protein (142 aa).

Topologically, residues 1-9 (MDMVSPVLN) are cytoplasmic. The helical transmembrane segment at 10–30 (LQSSILGELVGIIGKVFFLLI) threads the bilayer. Topologically, residues 31–41 (EEIKYPIITPK) are extracellular. The helical transmembrane segment at 42–62 (IIVDAQISSWSLFFFASICNL) threads the bilayer. Residues 63–101 (SAKFREPIVTTSSIISLMESEKDLKNVNEYFQIMAKMLF) lie on the Cytoplasmic side of the membrane. Residues 102–122 (ILENKIVVSLFVVFNISVLII) traverse the membrane as a helical segment. Residues 123-142 (VKSEPYSYGKVLFKPSSSIF) lie on the Extracellular side of the membrane.

Its subcellular location is the membrane. This is an uncharacterized protein from Saccharomyces cerevisiae (strain ATCC 204508 / S288c) (Baker's yeast).